A 116-amino-acid chain; its full sequence is Large ribosomal subunit protein bL20 (116 aa).

The protein belongs to the bacterial ribosomal protein bL20 family.

Functionally, binds directly to 23S ribosomal RNA and is necessary for the in vitro assembly process of the 50S ribosomal subunit. It is not involved in the protein synthesizing functions of that subunit. The chain is Large ribosomal subunit protein bL20 from Desulfatibacillum aliphaticivorans.